The primary structure comprises 256 residues: Ribonuclease HII (256 aa).

Residues 72–256 enclose the RNase H type-2 domain; that stretch reads ALICGIDEVG…SFEPIKSMMK (185 aa). Residues D78, E79, and D170 each contribute to the a divalent metal cation site.

This sequence belongs to the RNase HII family. The cofactor is Mn(2+). Requires Mg(2+) as cofactor.

It is found in the cytoplasm. It carries out the reaction Endonucleolytic cleavage to 5'-phosphomonoester.. Functionally, endonuclease that specifically degrades the RNA of RNA-DNA hybrids. In Staphylococcus epidermidis (strain ATCC 12228 / FDA PCI 1200), this protein is Ribonuclease HII.